The following is a 290-amino-acid chain: 4-hydroxy-tetrahydrodipicolinate synthase (290 aa).

Position 44 (Thr-44) interacts with pyruvate. The active-site Proton donor/acceptor is the Tyr-132. Lys-160 functions as the Schiff-base intermediate with substrate in the catalytic mechanism. Residue Ile-202 participates in pyruvate binding.

It belongs to the DapA family. Homotetramer; dimer of dimers.

It is found in the cytoplasm. The enzyme catalyses L-aspartate 4-semialdehyde + pyruvate = (2S,4S)-4-hydroxy-2,3,4,5-tetrahydrodipicolinate + H2O + H(+). The protein operates within amino-acid biosynthesis; L-lysine biosynthesis via DAP pathway; (S)-tetrahydrodipicolinate from L-aspartate: step 3/4. Catalyzes the condensation of (S)-aspartate-beta-semialdehyde [(S)-ASA] and pyruvate to 4-hydroxy-tetrahydrodipicolinate (HTPA). This Geobacter sp. (strain M21) protein is 4-hydroxy-tetrahydrodipicolinate synthase.